The primary structure comprises 161 residues: Globin CTT-VIIB-6 (161 aa).

Positions Met1–Ala16 are cleaved as a signal peptide. Residues Pro18 to Leu161 enclose the Globin domain. His76 and His111 together coordinate heme b.

Belongs to the globin family. Homodimer.

The protein is Globin CTT-VIIB-6 (CTT-7B6) of Chironomus thummi thummi (Midge).